Reading from the N-terminus, the 221-residue chain is Immediate early response gene 2 protein (221 aa).

Methionine 1 carries the N-acetylmethionine modification. Residues 105-155 are disordered; that stretch reads ETPALCDPPPARVSRKRRSSSDLSDGSDAGLVPSKKARLEEVEGEATSEVP. Low complexity predominate over residues 125-136; it reads SDLSDGSDAGLV.

Belongs to the IER family.

It is found in the cytoplasm. Its subcellular location is the nucleus. In terms of biological role, DNA-binding protein that seems to act as a transcription factor. Involved in the regulation of neuronal differentiation, acts upon JNK-signaling pathway activation and plays a role in neurite outgrowth in hippocampal cells. May mediate with FIBP FGF-signaling in the establishment of laterality in the embryo. Promotes cell motility, seems to stimulate tumor metastasis. This Mus musculus (Mouse) protein is Immediate early response gene 2 protein (Ier2).